The chain runs to 345 residues: S-adenosylmethionine:tRNA ribosyltransferase-isomerase (345 aa).

It belongs to the QueA family. In terms of assembly, monomer.

Its subcellular location is the cytoplasm. It catalyses the reaction 7-aminomethyl-7-carbaguanosine(34) in tRNA + S-adenosyl-L-methionine = epoxyqueuosine(34) in tRNA + adenine + L-methionine + 2 H(+). The protein operates within tRNA modification; tRNA-queuosine biosynthesis. In terms of biological role, transfers and isomerizes the ribose moiety from AdoMet to the 7-aminomethyl group of 7-deazaguanine (preQ1-tRNA) to give epoxyqueuosine (oQ-tRNA). The chain is S-adenosylmethionine:tRNA ribosyltransferase-isomerase from Helicobacter pylori (strain P12).